Consider the following 2090-residue polypeptide: Dysferlin (2090 aa).

Residues 1-101 enclose the C2 1 domain; sequence MLRVFILFAE…LATPSLSASF (101 aa). The Cytoplasmic segment spans residues 1–2056; that stretch reads MLRVFILFAE…FILWRRFRCA (2056 aa). Ca(2+) is bound by residues D18, I19, D21, and N40. The segment at 130–217 is disordered; the sequence is VPLFPPPASL…SAPPRKLLSD (88 aa). Acidic residues predominate over residues 155–172; the sequence is GGEEDTEDQGLTGDEAEP. The residue at position 164 (G164) is a Phosphoserine. T166 bears the Phosphothreonine mark. Position 167 is a phosphoserine (G167). Pro residues predominate over residues 188-199; sequence PRKPPSHPPPHY. C2 domains follow at residues 206-323, 362-498, 1146-1272, 1320-1448, 1571-1689, and 1805-1953; these read RSSA…RKWL, DKED…EEEP, GVNR…PLTR, PPPQ…AESP, PMPP…ARCG, and GRPG…EKCS. Residue A209 is modified to Phosphoserine. Residue P219 is modified to Phosphothreonine. The Ca(2+) site is built by D411, D419, D467, D469, D475, D1178, D1184, D1240, and D1242. Residues D1604, D1610, D1659, D1661, D1924, S1927, and D1930 each contribute to the Ca(2+) site. Residues 2005–2027 are disordered; sequence SEHEERPAGQGRDEPNMNPKLED. Residues 2057–2077 form a helical membrane-spanning segment; the sequence is IILFIILFILLLFLGVFVYAF. The Extracellular segment spans residues 2078 to 2090; it reads PNYAAMKLVKPFR.

It belongs to the ferlin family. In terms of assembly, interacts with CAV3. Interacts with AHNAK; the interaction is direct and Ca(2+)-independent. Interacts with AHNAK2; the interaction is direct and Ca(2+)-independent. Interacts with ANXA1; the interaction is Ca(2+)- and injury state-dependent. Interacts with ANXA2; the interaction is Ca(2+)- and injury state-dependent. Interacts with CACNA1S and PARVB. Interacts with TRIM72/MG53; interaction is required for transport to sites of cell injury during repair patch formation. Interacts with RIPOR2; this interaction occurs during early myogenic differentiation. Ca(2+) is required as a cofactor. As to expression, expressed in skeletal and cardiac muscles (at protein level). Expressed in skeletal muscle and heart. Also found in brain, liver and kidney.

It is found in the cell membrane. The protein resides in the sarcolemma. It localises to the cytoplasmic vesicle membrane. In terms of biological role, key calcium ion sensor involved in the Ca(2+)-triggered synaptic vesicle-plasma membrane fusion. Plays a role in the sarcolemma repair mechanism of both skeletal muscle and cardiomyocytes that permits rapid resealing of membranes disrupted by mechanical stress. This chain is Dysferlin (Dysf), found in Mus musculus (Mouse).